Reading from the N-terminus, the 303-residue chain is UDP-3-O-acyl-N-acetylglucosamine deacetylase (303 aa).

Positions 78, 237, and 241 each coordinate Zn(2+). Catalysis depends on H264, which acts as the Proton donor.

Belongs to the LpxC family. The cofactor is Zn(2+).

The catalysed reaction is a UDP-3-O-[(3R)-3-hydroxyacyl]-N-acetyl-alpha-D-glucosamine + H2O = a UDP-3-O-[(3R)-3-hydroxyacyl]-alpha-D-glucosamine + acetate. Its pathway is glycolipid biosynthesis; lipid IV(A) biosynthesis; lipid IV(A) from (3R)-3-hydroxytetradecanoyl-[acyl-carrier-protein] and UDP-N-acetyl-alpha-D-glucosamine: step 2/6. Its function is as follows. Catalyzes the hydrolysis of UDP-3-O-myristoyl-N-acetylglucosamine to form UDP-3-O-myristoylglucosamine and acetate, the committed step in lipid A biosynthesis. This Coxiella burnetii (strain CbuK_Q154) (Coxiella burnetii (strain Q154)) protein is UDP-3-O-acyl-N-acetylglucosamine deacetylase.